The primary structure comprises 274 residues: Large ribosomal subunit protein uL2 (274 aa).

The interval 224-274 (VMNPVDHPHGGGEGRSPIGRNPVTPWGKPALGARTRKKKPGDRLIVKRRAR) is disordered. The segment covering 257–274 (RTRKKKPGDRLIVKRRAR) has biased composition (basic residues).

This sequence belongs to the universal ribosomal protein uL2 family. In terms of assembly, part of the 50S ribosomal subunit. Forms a bridge to the 30S subunit in the 70S ribosome.

Functionally, one of the primary rRNA binding proteins. Required for association of the 30S and 50S subunits to form the 70S ribosome, for tRNA binding and peptide bond formation. It has been suggested to have peptidyltransferase activity; this is somewhat controversial. Makes several contacts with the 16S rRNA in the 70S ribosome. The polypeptide is Large ribosomal subunit protein uL2 (Pelotomaculum thermopropionicum (strain DSM 13744 / JCM 10971 / SI)).